A 425-amino-acid chain; its full sequence is Gamma-glutamyl phosphate reductase (425 aa).

Belongs to the gamma-glutamyl phosphate reductase family.

The protein resides in the cytoplasm. The enzyme catalyses L-glutamate 5-semialdehyde + phosphate + NADP(+) = L-glutamyl 5-phosphate + NADPH + H(+). It functions in the pathway amino-acid biosynthesis; L-proline biosynthesis; L-glutamate 5-semialdehyde from L-glutamate: step 2/2. Catalyzes the NADPH-dependent reduction of L-glutamate 5-phosphate into L-glutamate 5-semialdehyde and phosphate. The product spontaneously undergoes cyclization to form 1-pyrroline-5-carboxylate. The chain is Gamma-glutamyl phosphate reductase from Xylella fastidiosa (strain M23).